The following is a 166-amino-acid chain: UPF0179 protein Tneu_1978 (166 aa).

The segment at P140–K166 is disordered. Over residues R157–K166 the composition is skewed to pro residues.

Belongs to the UPF0179 family.

This Pyrobaculum neutrophilum (strain DSM 2338 / JCM 9278 / NBRC 100436 / V24Sta) (Thermoproteus neutrophilus) protein is UPF0179 protein Tneu_1978.